A 156-amino-acid polypeptide reads, in one-letter code: Small ribosomal subunit protein uS7 (156 aa).

It belongs to the universal ribosomal protein uS7 family. Part of the 30S ribosomal subunit. Contacts proteins S9 and S11.

Functionally, one of the primary rRNA binding proteins, it binds directly to 16S rRNA where it nucleates assembly of the head domain of the 30S subunit. Is located at the subunit interface close to the decoding center, probably blocks exit of the E-site tRNA. The sequence is that of Small ribosomal subunit protein uS7 from Chromohalobacter salexigens (strain ATCC BAA-138 / DSM 3043 / CIP 106854 / NCIMB 13768 / 1H11).